The chain runs to 139 residues: Small ribosomal subunit protein uS12 (139 aa).

A disordered region spans residues 1–55 (MPTINQLIRKGRKAKVKKSDSPALNKGYNSFKKVQTDLSSPQKRGVCTRVGTMTP). Positions 32-42 (KKVQTDLSSPQ) are enriched in polar residues.

It belongs to the universal ribosomal protein uS12 family. Part of the 30S ribosomal subunit. Contacts proteins S8 and S17. May interact with IF1 in the 30S initiation complex.

With S4 and S5 plays an important role in translational accuracy. Functionally, interacts with and stabilizes bases of the 16S rRNA that are involved in tRNA selection in the A site and with the mRNA backbone. Located at the interface of the 30S and 50S subunits, it traverses the body of the 30S subunit contacting proteins on the other side and probably holding the rRNA structure together. The combined cluster of proteins S8, S12 and S17 appears to hold together the shoulder and platform of the 30S subunit. The polypeptide is Small ribosomal subunit protein uS12 (Halalkalibacterium halodurans (strain ATCC BAA-125 / DSM 18197 / FERM 7344 / JCM 9153 / C-125) (Bacillus halodurans)).